A 316-amino-acid polypeptide reads, in one-letter code: 4-hydroxy-3-methylbut-2-enyl diphosphate reductase (316 aa).

A [4Fe-4S] cluster-binding site is contributed by Cys12. (2E)-4-hydroxy-3-methylbut-2-enyl diphosphate is bound by residues His41 and His74. Residues His41 and His74 each coordinate dimethylallyl diphosphate. Isopentenyl diphosphate-binding residues include His41 and His74. Cys96 contacts [4Fe-4S] cluster. His124 contacts (2E)-4-hydroxy-3-methylbut-2-enyl diphosphate. A dimethylallyl diphosphate-binding site is contributed by His124. His124 is a binding site for isopentenyl diphosphate. Glu126 acts as the Proton donor in catalysis. A (2E)-4-hydroxy-3-methylbut-2-enyl diphosphate-binding site is contributed by Thr169. Cys199 contributes to the [4Fe-4S] cluster binding site. Residues Ser227, Ser228, Asn229, and Ser271 each contribute to the (2E)-4-hydroxy-3-methylbut-2-enyl diphosphate site. Residues Ser227, Ser228, Asn229, and Ser271 each coordinate dimethylallyl diphosphate. The isopentenyl diphosphate site is built by Ser227, Ser228, Asn229, and Ser271.

The protein belongs to the IspH family. Requires [4Fe-4S] cluster as cofactor.

It catalyses the reaction isopentenyl diphosphate + 2 oxidized [2Fe-2S]-[ferredoxin] + H2O = (2E)-4-hydroxy-3-methylbut-2-enyl diphosphate + 2 reduced [2Fe-2S]-[ferredoxin] + 2 H(+). It carries out the reaction dimethylallyl diphosphate + 2 oxidized [2Fe-2S]-[ferredoxin] + H2O = (2E)-4-hydroxy-3-methylbut-2-enyl diphosphate + 2 reduced [2Fe-2S]-[ferredoxin] + 2 H(+). The protein operates within isoprenoid biosynthesis; dimethylallyl diphosphate biosynthesis; dimethylallyl diphosphate from (2E)-4-hydroxy-3-methylbutenyl diphosphate: step 1/1. It functions in the pathway isoprenoid biosynthesis; isopentenyl diphosphate biosynthesis via DXP pathway; isopentenyl diphosphate from 1-deoxy-D-xylulose 5-phosphate: step 6/6. Catalyzes the conversion of 1-hydroxy-2-methyl-2-(E)-butenyl 4-diphosphate (HMBPP) into a mixture of isopentenyl diphosphate (IPP) and dimethylallyl diphosphate (DMAPP). Acts in the terminal step of the DOXP/MEP pathway for isoprenoid precursor biosynthesis. This chain is 4-hydroxy-3-methylbut-2-enyl diphosphate reductase, found in Vibrio vulnificus (strain CMCP6).